We begin with the raw amino-acid sequence, 345 residues long: 3-hydroxy-5-methyl-1-naphthoate 3-O-methyltransferase (345 aa).

S-adenosyl-L-methionine is bound at residue aspartate 205. Histidine 252 functions as the Proton acceptor in the catalytic mechanism.

The protein belongs to the class I-like SAM-binding methyltransferase superfamily. Cation-independent O-methyltransferase family.

It carries out the reaction 3-hydroxy-5-methyl-1-naphthoate + S-adenosyl-L-methionine = 3-methoxy-5-methyl-1-naphthoate + S-adenosyl-L-homocysteine + H(+). It participates in antibiotic biosynthesis. Inhibited by different divalent cations, such as Mg(2+), Mn(2+), Fe(2+), Cu(2+) and Zn(2+). Its function is as follows. O-methyltransferase that mediates the formation of 3-methoxy-5-methyl-1-naphthoate from 3-hydroxy-5-methyl-1-naphthoate in the biosynthesis of the antitumor antibiotic azinomycin B. This is 3-hydroxy-5-methyl-1-naphthoate 3-O-methyltransferase from Streptomyces sahachiroi.